The sequence spans 322 residues: Ferredoxin--NADP reductase (322 aa).

Aspartate 34, glutamine 42, tyrosine 47, valine 87, phenylalanine 120, aspartate 279, and threonine 320 together coordinate FAD.

Belongs to the ferredoxin--NADP reductase type 2 family. In terms of assembly, homodimer. The cofactor is FAD.

The catalysed reaction is 2 reduced [2Fe-2S]-[ferredoxin] + NADP(+) + H(+) = 2 oxidized [2Fe-2S]-[ferredoxin] + NADPH. The polypeptide is Ferredoxin--NADP reductase (Streptococcus pneumoniae serotype 19F (strain G54)).